The following is a 211-amino-acid chain: Urease accessory protein UreE (211 aa).

Residues 134–211 form a disordered region; sequence FDPEGGAYAP…DHHGHGHEHK (78 aa). Over residues 147-202 the composition is skewed to basic and acidic residues; it reads PSHDHAGHDHAHDSHAHHDHDHGKHAQHDHGKHDHAHHDHAAHDDHHVHDEHCGHD.

Belongs to the UreE family.

It localises to the cytoplasm. Its function is as follows. Involved in urease metallocenter assembly. Binds nickel. Probably functions as a nickel donor during metallocenter assembly. The chain is Urease accessory protein UreE from Rhodopseudomonas palustris (strain BisB18).